The sequence spans 2542 residues: Probable polyketide synthase 41 (2542 aa).

One can recognise a Ketosynthase family 3 (KS3) domain in the interval C11 to S441. Catalysis depends on for beta-ketoacyl synthase activity residues C177, H318, and H360. Positions G628–Y661 are acyl/malonyl transferase. The active-site For acyl/malonyl transferase activity is the S638. An N-terminal hotdog fold region spans residues I926–P1059. A PKS/mFAS DH domain is found at I926–P1231. The Proton acceptor; for dehydratase activity role is filled by H959. The tract at residues N1083–P1231 is C-terminal hotdog fold. Catalysis depends on D1145, which acts as the Proton donor; for dehydratase activity. In terms of domain architecture, Carrier spans N2459–M2537. Residue S2496 is modified to O-(pantetheine 4'-phosphoryl)serine.

Pantetheine 4'-phosphate serves as cofactor.

Its function is as follows. Probable polyketide synthase. In Dictyostelium discoideum (Social amoeba), this protein is Probable polyketide synthase 41 (pks41).